Reading from the N-terminus, the 350-residue chain is 3-isopropylmalate dehydrogenase (350 aa).

76–87 contacts NAD(+); sequence GPKWDNAPKRPE. Substrate is bound by residues R94, R104, R132, and D217. Mg(2+) contacts are provided by D217, D241, and D245. 275 to 287 serves as a coordination point for NAD(+); it reads GSAPDIANQNIAN.

This sequence belongs to the isocitrate and isopropylmalate dehydrogenases family. LeuB type 1 subfamily. Homodimer. The cofactor is Mg(2+). Requires Mn(2+) as cofactor.

It is found in the cytoplasm. The catalysed reaction is (2R,3S)-3-isopropylmalate + NAD(+) = 4-methyl-2-oxopentanoate + CO2 + NADH. It participates in amino-acid biosynthesis; L-leucine biosynthesis; L-leucine from 3-methyl-2-oxobutanoate: step 3/4. Catalyzes the oxidation of 3-carboxy-2-hydroxy-4-methylpentanoate (3-isopropylmalate) to 3-carboxy-4-methyl-2-oxopentanoate. The product decarboxylates to 4-methyl-2 oxopentanoate. The chain is 3-isopropylmalate dehydrogenase from Listeria monocytogenes serotype 4b (strain F2365).